The following is a 144-amino-acid chain: Flagellar assembly factor FliW (144 aa).

The protein belongs to the FliW family. In terms of assembly, interacts with translational regulator CsrA and flagellin(s).

The protein localises to the cytoplasm. Functionally, acts as an anti-CsrA protein, binds CsrA and prevents it from repressing translation of its target genes, one of which is flagellin. Binds to flagellin and participates in the assembly of the flagellum. In Geobacillus kaustophilus (strain HTA426), this protein is Flagellar assembly factor FliW.